Consider the following 320-residue polypeptide: Protease HtpX homolog (320 aa).

2 consecutive transmembrane segments (helical) span residues 6 to 26 and 28 to 48; these read TAML…LIGG and AGMM…YWNS. Histidine 130 is a binding site for Zn(2+). Glutamate 131 is an active-site residue. Zn(2+) is bound at residue histidine 134. The next 2 helical transmembrane spans lie at 145-165 and 173-193; these read ITAT…FFGG and PLGF…AMLV. Zn(2+) is bound at residue glutamate 202. Residues 281 to 320 form a disordered region; it reads GGMNVSTPPVRAANPSRKSRSVPDTGLGRGGSQPPKGPWS.

This sequence belongs to the peptidase M48B family. Zn(2+) is required as a cofactor.

It is found in the cell inner membrane. The polypeptide is Protease HtpX homolog (Rhizobium leguminosarum bv. trifolii (strain WSM2304)).